The following is a 293-amino-acid chain: Lipoyl synthase (293 aa).

Residues cysteine 47, cysteine 52, cysteine 58, cysteine 73, cysteine 77, cysteine 80, and serine 285 each coordinate [4Fe-4S] cluster. Residues 59-274 enclose the Radical SAM core domain; that stretch reads WSEGTATFMI…EKIGLELGFR (216 aa).

The protein belongs to the radical SAM superfamily. Lipoyl synthase family. The cofactor is [4Fe-4S] cluster.

The protein resides in the cytoplasm. It carries out the reaction [[Fe-S] cluster scaffold protein carrying a second [4Fe-4S](2+) cluster] + N(6)-octanoyl-L-lysyl-[protein] + 2 oxidized [2Fe-2S]-[ferredoxin] + 2 S-adenosyl-L-methionine + 4 H(+) = [[Fe-S] cluster scaffold protein] + N(6)-[(R)-dihydrolipoyl]-L-lysyl-[protein] + 4 Fe(3+) + 2 hydrogen sulfide + 2 5'-deoxyadenosine + 2 L-methionine + 2 reduced [2Fe-2S]-[ferredoxin]. The protein operates within protein modification; protein lipoylation via endogenous pathway; protein N(6)-(lipoyl)lysine from octanoyl-[acyl-carrier-protein]: step 2/2. Its function is as follows. Catalyzes the radical-mediated insertion of two sulfur atoms into the C-6 and C-8 positions of the octanoyl moiety bound to the lipoyl domains of lipoate-dependent enzymes, thereby converting the octanoylated domains into lipoylated derivatives. This Christiangramia forsetii (strain DSM 17595 / CGMCC 1.15422 / KT0803) (Gramella forsetii) protein is Lipoyl synthase.